Reading from the N-terminus, the 722-residue chain is Mesentericin-Y105 transport/processing ATP-binding protein MesD (722 aa).

Residues 16-143 form the Peptidase C39 domain; the sequence is QVDERDCGVA…EEWTGVSIFI (128 aa). Cys22 is a catalytic residue. Transmembrane regions (helical) follow at residues 171 to 191, 210 to 230, 242 to 262, 287 to 307, 311 to 331, 401 to 421, 429 to 449, and 518 to 538; these read LLVI…ILGS, LGIV…LSYA, LSID…MSFF, TMLS…VLVV, TLFL…WLFM, SLLQ…LVMT, LITY…IINL, and IALV…LVNF. Residues 173–455 enclose the ABC transmembrane type-1 domain; the sequence is VINIVIAALL…IINLQTKLQQ (283 aa). An ABC transporter domain is found at 489 to 722; the sequence is LVADHITYKY…GGFYASLFNH (234 aa). 522–529 contributes to the ATP binding site; that stretch reads GISGSGKS.

This sequence belongs to the ABC transporter superfamily.

Its subcellular location is the cell membrane. Its function is as follows. Involved in the export process of the bacteriocin mesentericin-Y105. This chain is Mesentericin-Y105 transport/processing ATP-binding protein MesD (mesD), found in Leuconostoc mesenteroides.